A 73-amino-acid chain; its full sequence is MARITVEDCLAEVGNRFLIVQMAIKRVKQYREGYSPLVESKNKEIVTALREIAATKVLPESYHTADGKKPGSE.

This sequence belongs to the RNA polymerase subunit omega family. In terms of assembly, the RNAP catalytic core consists of 2 alpha, 1 beta, 1 beta' and 1 omega subunit. When a sigma factor is associated with the core the holoenzyme is formed, which can initiate transcription.

The enzyme catalyses RNA(n) + a ribonucleoside 5'-triphosphate = RNA(n+1) + diphosphate. In terms of biological role, promotes RNA polymerase assembly. Latches the N- and C-terminal regions of the beta' subunit thereby facilitating its interaction with the beta and alpha subunits. This is DNA-directed RNA polymerase subunit omega from Maridesulfovibrio salexigens (strain ATCC 14822 / DSM 2638 / NCIMB 8403 / VKM B-1763) (Desulfovibrio salexigens).